We begin with the raw amino-acid sequence, 475 residues long: NADH-ubiquinone oxidoreductase chain 2 (475 aa).

The next 13 helical transmembrane spans lie at 45-65, 82-102, 112-132, 133-153, 162-182, 198-220, 240-260, 262-282, 291-311, 318-338, 365-385, 402-422, and 447-467; these read LAVL…GIQY, APIV…LTTT, IALL…VNDL, IPLY…TGVY, AAIL…LSSA, TYYS…ALVF, LYIT…FIYL, IHLF…AVAA, IKSI…TAVL, YIYI…ILAI, LCIA…LPGF, LEAL…AYII, and FIIS…PTLL.

It belongs to the complex I subunit 2 family.

The protein resides in the mitochondrion inner membrane. The catalysed reaction is a ubiquinone + NADH + 5 H(+)(in) = a ubiquinol + NAD(+) + 4 H(+)(out). Its function is as follows. Core subunit of the mitochondrial membrane respiratory chain NADH dehydrogenase (Complex I) that is believed to belong to the minimal assembly required for catalysis. Complex I functions in the transfer of electrons from NADH to the respiratory chain. The immediate electron acceptor for the enzyme is believed to be ubiquinone. The chain is NADH-ubiquinone oxidoreductase chain 2 (NAD2) from Candida albicans (strain SC5314 / ATCC MYA-2876) (Yeast).